A 197-amino-acid polypeptide reads, in one-letter code: Recombination protein RecR (197 aa).

Residues 55-70 (CVQCRDFTESEICTIC) form a C4-type zinc finger. The region spanning 78–173 (QQLCVVESPA…RPSRLAQGMP (96 aa)) is the Toprim domain.

The protein belongs to the RecR family.

In terms of biological role, may play a role in DNA repair. It seems to be involved in an RecBC-independent recombinational process of DNA repair. It may act with RecF and RecO. This is Recombination protein RecR from Xanthomonas oryzae pv. oryzae (strain MAFF 311018).